Reading from the N-terminus, the 233-residue chain is Sugar fermentation stimulation protein homolog (233 aa).

Belongs to the SfsA family.

This is Sugar fermentation stimulation protein homolog from Chelativorans sp. (strain BNC1).